The chain runs to 191 residues: Large ribosomal subunit protein uL5 (191 aa).

This sequence belongs to the universal ribosomal protein uL5 family. In terms of assembly, part of the 50S ribosomal subunit; part of the 5S rRNA/L5/L18/L25 subcomplex. Contacts the 5S rRNA and the P site tRNA. Forms a bridge to the 30S subunit in the 70S ribosome.

Its function is as follows. This is one of the proteins that bind and probably mediate the attachment of the 5S RNA into the large ribosomal subunit, where it forms part of the central protuberance. In the 70S ribosome it contacts protein S13 of the 30S subunit (bridge B1b), connecting the 2 subunits; this bridge is implicated in subunit movement. Contacts the P site tRNA; the 5S rRNA and some of its associated proteins might help stabilize positioning of ribosome-bound tRNAs. This is Large ribosomal subunit protein uL5 from Thermobifida fusca (strain YX).